We begin with the raw amino-acid sequence, 195 residues long: MNPVYSPGSSGVPYANAKGIGYPAGFPMGYAAAAPAYSPNMYPGANPTFQAGYTSGTPYKVSCSPTSGAVPPYSSSPNPYQTAVYPVRSAYPQQSPYAQQGTYYTQPLYAAPPHVIHHTTVVQPNGMPATVYPAPLPPPRGNGVTMGMVAGTTMAMSAGTLLTAHSPTPVAPHPVTVPTYRAPGTPTYSYVPPQW.

N-acetylmethionine is present on Met-1. At 1–18 (MNPVYSPGSSGVPYANAK) the chain is on the cytoplasmic side. Ser-6 bears the Phosphoserine mark. The helical transmembrane segment at 19–42 (GIGYPAGFPMGYAAAAPAYSPNMY) threads the bilayer. The Extracellular segment spans residues 43–142 (PGANPTFQAG…PAPLPPPRGN (100 aa)). N-linked (GlcNAc...) asparagine glycosylation is present at Asn-46. A helical transmembrane segment spans residues 143-164 (GVTMGMVAGTTMAMSAGTLLTA). The Cytoplasmic segment spans residues 165 to 195 (HSPTPVAPHPVTVPTYRAPGTPTYSYVPPQW).

This sequence belongs to the FAM168 family. In terms of assembly, may form homodimers. May interact with DAZAP2, FAM168A, PRDX6, RBM6, TMTC1 and YPEL2. Interacts with CDC27. N-glycosylated.

It localises to the cytoplasm. The protein resides in the perinuclear region. Its subcellular location is the cell membrane. It is found in the cell projection. The protein localises to the axon. Its function is as follows. Inhibitor of neuronal axonal outgrowth. Acts as a negative regulator of CDC42 and STAT3 and a positive regulator of STMN2. Positive regulator of CDC27. This is Myelin-associated neurite-outgrowth inhibitor (FAM168B) from Bos taurus (Bovine).